The following is a 225-amino-acid chain: Orotate phosphoribosyltransferase (225 aa).

5-phospho-alpha-D-ribose 1-diphosphate contacts are provided by residues Arg107, Lys108, Lys111, and 133 to 141; that span reads EDLTTDGGS. Thr137 provides a ligand contact to orotate.

The protein belongs to the purine/pyrimidine phosphoribosyltransferase family. PyrE subfamily. Homodimer. Mg(2+) is required as a cofactor.

It carries out the reaction orotidine 5'-phosphate + diphosphate = orotate + 5-phospho-alpha-D-ribose 1-diphosphate. It participates in pyrimidine metabolism; UMP biosynthesis via de novo pathway; UMP from orotate: step 1/2. Its function is as follows. Catalyzes the transfer of a ribosyl phosphate group from 5-phosphoribose 1-diphosphate to orotate, leading to the formation of orotidine monophosphate (OMP). The chain is Orotate phosphoribosyltransferase from Roseobacter denitrificans (strain ATCC 33942 / OCh 114) (Erythrobacter sp. (strain OCh 114)).